The sequence spans 329 residues: Ribosomal RNA small subunit methyltransferase H (329 aa).

S-adenosyl-L-methionine is bound by residues 47–49, aspartate 67, phenylalanine 93, aspartate 115, and glutamine 122; that span reads GGH.

This sequence belongs to the methyltransferase superfamily. RsmH family.

It localises to the cytoplasm. It catalyses the reaction cytidine(1402) in 16S rRNA + S-adenosyl-L-methionine = N(4)-methylcytidine(1402) in 16S rRNA + S-adenosyl-L-homocysteine + H(+). Functionally, specifically methylates the N4 position of cytidine in position 1402 (C1402) of 16S rRNA. The sequence is that of Ribosomal RNA small subunit methyltransferase H from Blochmanniella pennsylvanica (strain BPEN).